We begin with the raw amino-acid sequence, 245 residues long: DNA polymerase sliding clamp (245 aa).

The protein belongs to the PCNA family. In terms of assembly, homotrimer. The subunits circularize to form a toroid; DNA passes through its center. Replication factor C (RFC) is required to load the toroid on the DNA.

Sliding clamp subunit that acts as a moving platform for DNA processing. Responsible for tethering the catalytic subunit of DNA polymerase and other proteins to DNA during high-speed replication. The sequence is that of DNA polymerase sliding clamp from Methanosarcina mazei (strain ATCC BAA-159 / DSM 3647 / Goe1 / Go1 / JCM 11833 / OCM 88) (Methanosarcina frisia).